The following is a 167-amino-acid chain: Large ribosomal subunit protein uL10 (167 aa).

The protein belongs to the universal ribosomal protein uL10 family. As to quaternary structure, part of the ribosomal stalk of the 50S ribosomal subunit. The N-terminus interacts with L11 and the large rRNA to form the base of the stalk. The C-terminus forms an elongated spine to which L12 dimers bind in a sequential fashion forming a multimeric L10(L12)X complex.

Its function is as follows. Forms part of the ribosomal stalk, playing a central role in the interaction of the ribosome with GTP-bound translation factors. The protein is Large ribosomal subunit protein uL10 of Flavobacterium johnsoniae (strain ATCC 17061 / DSM 2064 / JCM 8514 / BCRC 14874 / CCUG 350202 / NBRC 14942 / NCIMB 11054 / UW101) (Cytophaga johnsonae).